A 4660-amino-acid polypeptide reads, in one-letter code: Low-density lipoprotein receptor-related protein 2 (4660 aa).

An N-terminal signal peptide occupies residues 1–25 (MERGAAAAAWMLLLAIAACLEPVSS). Residues 26–4425 (QECGSGNFRC…LSRGIPPGTT (4400 aa)) are Extracellular-facing. 6 LDL-receptor class A domains span residues 27–63 (ECGS…IGCP), 66–104 (SCES…QNCA), 107–143 (TCSA…RNCH), 141–180 (NCHY…ANCT), 182–218 (LCSQ…RNCN), and 221–257 (TCGG…DGCE). Intrachain disulfides connect cysteine 28–cysteine 40, cysteine 35–cysteine 53, cysteine 47–cysteine 62, cysteine 67–cysteine 80, cysteine 74–cysteine 93, cysteine 87–cysteine 103, cysteine 108–cysteine 120, cysteine 115–cysteine 133, cysteine 127–cysteine 142, cysteine 142–cysteine 157, cysteine 152–cysteine 170, cysteine 164–cysteine 179, cysteine 183–cysteine 195, cysteine 190–cysteine 208, cysteine 202–cysteine 217, cysteine 222–cysteine 234, cysteine 229–cysteine 247, and cysteine 241–cysteine 256. 2 N-linked (GlcNAc...) asparagine glycosylation sites follow: asparagine 159 and asparagine 178. Asparagine 259 carries N-linked (GlcNAc...) asparagine glycosylation. In terms of domain architecture, LDL-receptor class A 7 spans 264-307 (RCYPREWACPGSGRCISIDKVCDGVPDCPEGDDENNVTSGRTCG). Disulfide bonds link cysteine 265–cysteine 278, cysteine 272–cysteine 291, and cysteine 285–cysteine 306. N-linked (GlcNAc...) asparagine glycans are attached at residues asparagine 299 and asparagine 340. Residues 347-382 (DFDDCQIWGICDQKCENRQGRHQCLCEEGYILERGQ) form the EGF-like 1; calcium-binding domain. Intrachain disulfides connect cysteine 351–cysteine 361 and cysteine 357–cysteine 370. LDL-receptor class B repeat units follow at residues 435–477 (HRVF…DWIN), 478–520 (NKLY…DPTV), 521–567 (GYLF…DLVS), and 568–612 (KRVY…FEEH). Asparagine 462 carries an N-linked (GlcNAc...) asparagine glycan. Residue asparagine 657 is glycosylated (N-linked (GlcNAc...) asparagine). LDL-receptor class B repeat units follow at residues 752 to 794 (STVF…DWIS), 795 to 836 (RNLY…HPTA), 837 to 880 (GYMF…DWSA), and 881 to 924 (SRLY…FKDN). An N-linked (GlcNAc...) asparagine glycan is attached at asparagine 865. An LDL-receptor class A 8 domain is found at 1024-1060 (QCGSLSFPCNNGKCVPSFFRCDGVDDCHDNSDEHQCG). 3 disulfide bridges follow: cysteine 1025–cysteine 1037, cysteine 1032–cysteine 1050, and cysteine 1044–cysteine 1059. N-linked (GlcNAc...) asparagine glycosylation occurs at asparagine 1063. 7 consecutive LDL-receptor class A domains span residues 1065 to 1102 (TCSP…QNCP), 1109 to 1145 (TCPS…KNCQ), 1149 to 1185 (TCQP…AGCV), 1187 to 1224 (NCTS…AGCP), 1230 to 1268 (MCHP…TGCV), 1271 to 1307 (TCSP…KDCP), and 1312 to 1350 (HCPS…PLCN). Intrachain disulfides connect cysteine 1066/cysteine 1079, cysteine 1073/cysteine 1092, cysteine 1086/cysteine 1101, cysteine 1110/cysteine 1122, cysteine 1117/cysteine 1135, cysteine 1129/cysteine 1144, cysteine 1150/cysteine 1162, cysteine 1157/cysteine 1175, and cysteine 1169/cysteine 1184. Ca(2+) is bound by residues tryptophan 1127, aspartate 1130, aspartate 1132, aspartate 1134, aspartate 1140, and glutamate 1141. A glycan (N-linked (GlcNAc...) asparagine) is linked at asparagine 1187. 18 disulfides stabilise this stretch: cysteine 1188–cysteine 1201, cysteine 1195–cysteine 1214, cysteine 1208–cysteine 1223, cysteine 1231–cysteine 1244, cysteine 1238–cysteine 1257, cysteine 1251–cysteine 1267, cysteine 1272–cysteine 1284, cysteine 1279–cysteine 1297, cysteine 1291–cysteine 1306, cysteine 1313–cysteine 1326, cysteine 1320–cysteine 1339, cysteine 1333–cysteine 1349, cysteine 1354–cysteine 1365, cysteine 1361–cysteine 1374, cysteine 1376–cysteine 1389, cysteine 1395–cysteine 1405, cysteine 1401–cysteine 1414, and cysteine 1416–cysteine 1429. The Ca(2+) site is built by tyrosine 1206, aspartate 1209, valine 1211, aspartate 1213, aspartate 1219, and glutamate 1220. 2 N-linked (GlcNAc...) asparagine glycosylation sites follow: asparagine 1328 and asparagine 1341. The EGF-like 2 domain occupies 1350–1390 (NQDSCSHFNGGCTHQCMQGPFGATCLCPLGYQLANDTKTCE). Asparagine 1384 carries an N-linked (GlcNAc...) asparagine glycan. The 40-residue stretch at 1391–1430 (DINECDIPGFCSQHCVNMRGSFRCACDPEYTLESDGRTCK) folds into the EGF-like 3; calcium-binding domain. N-linked (GlcNAc...) asparagine glycans are attached at residues asparagine 1451, asparagine 1497, and asparagine 1551. 5 LDL-receptor class B repeats span residues 1479–1521 (GRVF…DWIG), 1522–1564 (RNLY…DPRM), 1567–1610 (NVMF…DYPN), 1611–1655 (RLIY…FEDF), and 1656–1696 (VYWT…IHPS). Asparagine 1676, asparagine 1733, and asparagine 1811 each carry an N-linked (GlcNAc...) asparagine glycan. 9 LDL-receptor class B repeats span residues 1791–1833 (QFIY…DWVS), 1834–1883 (RNIY…DPAR), 1884–1931 (GKLY…DIQE), 1932–1973 (QKLY…YGSF), 1974–2014 (LYYS…YHRR), 2108–2157 (GFIY…DWAA), 2158–2202 (GNLY…DPKH), 2203–2246 (RYLF…DHDT), and 2247–2290 (GYIY…FGES). N-linked (GlcNAc...) asparagine glycosylation is found at asparagine 2134, asparagine 2178, and asparagine 2225. An N-linked (GlcNAc...) asparagine glycan is attached at asparagine 2396. 5 LDL-receptor class B repeats span residues 2432–2478 (NRIF…DWIN), 2479–2519 (RRIY…DPCR), 2520–2563 (GYMY…DLET), 2564–2605 (DLLY…YGQY), and 2606–2647 (IYWT…VVKT). Asparagine 2488 and asparagine 2548 each carry an N-linked (GlcNAc...) asparagine glycan. 10 LDL-receptor class A domains span residues 2700–2738 (RCNQ…TVCA), 2741–2777 (TCRS…AGCL), 2780–2819 (NCNS…KNCP), 2822–2861 (TCPP…IYCA), 2864–2902 (TCRS…DTCG), 2907–2946 (TCRA…HHCE), 2949–2991 (NCSS…QNCT), 2994–3030 (TCSA…RGCS), 3033–3071 (PCHA…HLCH), and 3076–3112 (TCPL…KGCG). Cystine bridges form between cysteine 2701/cysteine 2713, cysteine 2708/cysteine 2726, cysteine 2720/cysteine 2737, cysteine 2742/cysteine 2754, cysteine 2749/cysteine 2767, cysteine 2761/cysteine 2776, cysteine 2781/cysteine 2794, cysteine 2789/cysteine 2807, cysteine 2801/cysteine 2818, cysteine 2823/cysteine 2836, cysteine 2830/cysteine 2849, cysteine 2843/cysteine 2860, cysteine 2865/cysteine 2878, cysteine 2872/cysteine 2891, cysteine 2885/cysteine 2901, cysteine 2908/cysteine 2920, cysteine 2915/cysteine 2933, and cysteine 2927/cysteine 2945. N-linked (GlcNAc...) asparagine glycosylation is present at asparagine 2782. N-linked (GlcNAc...) asparagine glycosylation is present at asparagine 2810. Residue asparagine 2949 is glycosylated (N-linked (GlcNAc...) asparagine). Intrachain disulfides connect cysteine 2950-cysteine 2967, cysteine 2957-cysteine 2980, cysteine 2974-cysteine 2990, cysteine 2995-cysteine 3007, cysteine 3002-cysteine 3020, cysteine 3014-cysteine 3029, cysteine 3034-cysteine 3046, cysteine 3041-cysteine 3059, cysteine 3053-cysteine 3070, cysteine 3077-cysteine 3089, cysteine 3084-cysteine 3102, cysteine 3096-cysteine 3111, cysteine 3116-cysteine 3128, cysteine 3124-cysteine 3137, cysteine 3139-cysteine 3152, cysteine 3158-cysteine 3169, cysteine 3165-cysteine 3178, and cysteine 3180-cysteine 3193. The N-linked (GlcNAc...) asparagine glycan is linked to asparagine 2989. Positions 3112-3153 (GINECLDSSISRCDHNCTDTITSFYCSCLPGYKLMSDKRSCV) constitute an EGF-like 4 domain. The N-linked (GlcNAc...) asparagine glycan is linked to asparagine 3127. An EGF-like 5; calcium-binding domain is found at 3154–3194 (DIDECKESPQLCSQKCENVVGSYICKCAPGYIREPDGKSCR). Residues asparagine 3213, asparagine 3259, asparagine 3317, and asparagine 3357 are each glycosylated (N-linked (GlcNAc...) asparagine). LDL-receptor class B repeat units follow at residues 3241-3283 (KRLY…DWVS), 3284-3326 (RKLY…EHPR), 3335-3378 (GHVY…DYTN), 3379-3421 (DLLY…FEDT), and 3422-3462 (VFWT…YHPY). An N-linked (GlcNAc...) asparagine glycan is attached at asparagine 3448. 8 LDL-receptor class A domains span residues 3513–3551 (MCSS…DLCP), 3554–3592 (FCRL…VLCE), 3595–3633 (RCES…SHCA), 3636–3674 (TCRP…DECT), 3679–3717 (NCDN…QGCE), 3720–3757 (PCHP…ENCV), 3760–3796 (ECSE…RDCE), and 3799–3835 (TCHP…SACP). 24 disulfides stabilise this stretch: cysteine 3514–cysteine 3527, cysteine 3521–cysteine 3540, cysteine 3534–cysteine 3550, cysteine 3555–cysteine 3567, cysteine 3562–cysteine 3580, cysteine 3574–cysteine 3591, cysteine 3596–cysteine 3608, cysteine 3603–cysteine 3621, cysteine 3615–cysteine 3632, cysteine 3637–cysteine 3649, cysteine 3644–cysteine 3662, cysteine 3656–cysteine 3673, cysteine 3680–cysteine 3694, cysteine 3688–cysteine 3707, cysteine 3701–cysteine 3716, cysteine 3721–cysteine 3734, cysteine 3729–cysteine 3747, cysteine 3741–cysteine 3756, cysteine 3761–cysteine 3773, cysteine 3768–cysteine 3786, cysteine 3780–cysteine 3795, cysteine 3800–cysteine 3812, cysteine 3807–cysteine 3825, and cysteine 3819–cysteine 3834. Asparagine 3566 carries N-linked (GlcNAc...) asparagine glycosylation. Asparagine 3682 carries an N-linked (GlcNAc...) asparagine glycan. Asparagine 3840 carries an N-linked (GlcNAc...) asparagine glycan. LDL-receptor class A domains lie at 3843-3881 (YCPA…HLCF), 3884-3923 (PCES…EHCR), and 3929-3965 (PCTD…TGCN). Cystine bridges form between cysteine 3844–cysteine 3856, cysteine 3851–cysteine 3869, cysteine 3863–cysteine 3880, cysteine 3885–cysteine 3898, cysteine 3893–cysteine 3911, cysteine 3905–cysteine 3922, cysteine 3930–cysteine 3942, cysteine 3937–cysteine 3955, and cysteine 3949–cysteine 3964. In terms of domain architecture, EGF-like 6 spans 3968-4003 (DNRTCAENICEQNCTQLSSGGFICSCRPGFKPSTSD). Asparagine 3969 and asparagine 3980 each carry an N-linked (GlcNAc...) asparagine glycan. 5 disulfide bridges follow: cysteine 3972–cysteine 3981, cysteine 3977–cysteine 3991, cysteine 4013–cysteine 4023, cysteine 4019–cysteine 4032, and cysteine 4034–cysteine 4049. Residues 4009-4050 (DINECEEFGICPQSCRNSKGSYECFCVDGFKSMSTHYGERCA) enclose the EGF-like 7; calcium-binding domain. The N-linked (GlcNAc...) asparagine glycan is linked to asparagine 4070. 3 LDL-receptor class B repeats span residues 4156–4198 (RHIY…NPKL), 4199–4242 (GLMF…DYLN), and 4244–4285 (DRVY…FEDK). An N-linked (GlcNAc...) asparagine glycan is attached at asparagine 4329. The region spanning 4379-4413 (MPPPCRCMHGGNCYFDENELPKCKCSSGYSGEYCE) is the EGF-like 8 domain. Intrachain disulfides connect cysteine 4383/cysteine 4391, cysteine 4385/cysteine 4401, and cysteine 4403/cysteine 4412. The helical transmembrane segment at 4426-4446 (MAVLLTFVIVIIVGALVLVGL) threads the bilayer. The Cytoplasmic segment spans residues 4447 to 4660 (FHYRKTGSLL…ANLVKEDSDV (214 aa)). The short motif at 4454–4463 (SLLPTLPKLP) is the SH3-binding element. The PxLPxI/L motif 1; mediates interaction with ANKRA2 motif lies at 4457-4462 (PTLPKL). Residues 4460 to 4465 (PKLPSL) carry the PxLPxI/L motif 2; mediates interaction with ANKRA2 motif. Phosphoserine is present on residues serine 4464 and serine 4467. Positions 4522 to 4527 (FENPMY) match the Endocytosis signal motif. The interval 4559–4582 (NYGRPIDPSEIVPEPKPASPGADE) is disordered. Serine 4577 is modified (phosphoserine). The segment at 4597-4610 (QTTNFENPIYAEMD) is interaction with DAB2. The NPXY motif motif lies at 4603-4606 (NPIY). Positions 4606–4609 (YAEM) match the SH2-binding motif. Residues 4617-4660 (VAVAPPPSPSLPAKASKRNLTPGYTATEDTFKDTANLVKEDSDV) form a disordered region. The SH3-binding signature appears at 4619–4630 (VAPPPSPSLPAK). Serine 4624 bears the Phosphoserine mark. The span at 4634–4644 (RNLTPGYTATE) shows a compositional bias: polar residues. Threonine 4637 carries the post-translational modification Phosphothreonine. Residue serine 4658 is modified to Phosphoserine.

This sequence belongs to the LDLR family. As to quaternary structure, binds plasminogen, extracellular matrix components, plasminogen activator-plasminogen activator inhibitor type I complex, apolipoprotein E-enriched beta-VLDL, lipoprotein lipase, lactoferrin, CLU/clusterin and calcium. Forms a multimeric complex together with LRPAP1. Interacts (via PxLPxI/L motif) with ANKRA2 (via ankyrin repeats). Interacts with LRP2BP. Interacts (via NPXY motif) with DAB2; the interaction is not affected by tyrosine phosphorylation of the NPXY motif. Interacts with MB. Interacts with BMP4. Interacts with the Sonic hedgehog protein N-product which is the active product of SHH. Interacts with CST3 in a calcium-dependent manner. Interacts with the vitamin-D binding protein GC/DBP. Interacts with sex hormone-binding protein SHBG. Interacts with angiotensin-2. Also interacts with angiotensin 1-7. Interacts with APOM. Interacts with selenoprotein SEPP1. Interacts with LEP. Interacts with ALB. Interacts with the antiapoptotic protein BIRC5/survivin. Interacts with matrix metalloproteinase MMP2 in complex with metalloproteinase inhibitor TIMP1. In neurons, forms a trimeric complex with APP and APPB1/FE65. Interacts with LDLRAP1/ARH; mediates trafficking of LRP2 to the endocytic recycling compartment. Does not interact with beta-amyloid protein 40 alone but interacts with the complex composed of beta-amyloid protein 40 and CLU/APOJ. Interacts with MDK. A fraction undergoes proteolytic cleavage of the extracellular domain at the cell membrane to generate a cytoplasmic tail fragment. This is internalized into the early endosome from where it trafficks in an LDLRAP1/ARH-dependent manner to the endocytic recycling compartment (ERC). In the ERC, it is further cleaved by gamma-secretase to release a fragment which translocates to the nucleus and mediates transcriptional repression. In terms of processing, N-glycosylation is required for ligand binding. In the inner ear, expressed in the lumen of the endolymphatic sac where it localizes to macrophage-like cells as well as to mitochondria-rich and ribosome-rich epithelial cells (at protein level). In the inner ear, expressed in marginal cells of the stria vascularis, epithelial cells at the spiral prominence, epithelial cells of Reissner's membrane facing the cochlear duct, and Kolliker's organ (at protein level). Expressed in the choroid plexus epithelium in the brain (at protein level). In the brain, also expressed in astrocytes (at protein level). Expression also detected in epithelial cells of the kidney glomerulus and proximal tubule, lung, epididymis and yolk sac.

The protein localises to the apical cell membrane. Its subcellular location is the endosome lumen. It is found in the membrane. The protein resides in the clathrin-coated pit. It localises to the cell projection. The protein localises to the dendrite. Its subcellular location is the axon. Its function is as follows. Multiligand endocytic receptor. Acts together with CUBN to mediate endocytosis of high-density lipoproteins. Mediates receptor-mediated uptake of polybasic drugs such as aprotinin, aminoglycosides and polymyxin B. In the kidney, mediates the tubular uptake and clearance of leptin. Also mediates transport of leptin across the blood-brain barrier through endocytosis at the choroid plexus epithelium. Endocytosis of leptin in neuronal cells is required for hypothalamic leptin signaling and leptin-mediated regulation of feeding and body weight. Mediates endocytosis and subsequent lysosomal degradation of CST3 in kidney proximal tubule cells. Mediates renal uptake of 25-hydroxyvitamin D3 in complex with the vitamin D3 transporter GC/DBP. Mediates renal uptake of metallothionein-bound heavy metals. Together with CUBN, mediates renal reabsorption of myoglobin. Mediates renal uptake and subsequent lysosomal degradation of APOM. Plays a role in kidney selenium homeostasis by mediating renal endocytosis of selenoprotein SEPP1. Mediates renal uptake of the antiapoptotic protein BIRC5/survivin which may be important for functional integrity of the kidney. Mediates renal uptake of matrix metalloproteinase MMP2 in complex with metalloproteinase inhibitor TIMP1. Mediates endocytosis of Sonic hedgehog protein N-product (ShhN), the active product of SHH. Also mediates ShhN transcytosis. In the embryonic neuroepithelium, mediates endocytic uptake and degradation of BMP4, is required for correct SHH localization in the ventral neural tube and plays a role in patterning of the ventral telencephalon. Required at the onset of neurulation to sequester SHH on the apical surface of neuroepithelial cells of the rostral diencephalon ventral midline and to control PTCH1-dependent uptake and intracellular trafficking of SHH. During neurulation, required in neuroepithelial cells for uptake of folate bound to the folate receptor FOLR1 which is necessary for neural tube closure. In the adult brain, negatively regulates BMP signaling in the subependymal zone which enables neurogenesis to proceed. In astrocytes, mediates endocytosis of ALB which is required for the synthesis of the neurotrophic factor oleic acid. Involved in neurite branching. During optic nerve development, required for SHH-mediated migration and proliferation of oligodendrocyte precursor cells. Mediates endocytic uptake and clearance of SHH in the retinal margin which protects retinal progenitor cells from mitogenic stimuli and keeps them quiescent. Plays a role in reproductive organ development by mediating uptake in reproductive tissues of androgen and estrogen bound to the sex hormone binding protein SHBG. Mediates endocytosis of angiotensin-2. Also mediates endocytosis of angiotensin 1-7. Binds to the complex composed of beta-amyloid protein 40 and CLU/APOJ and mediates its endocytosis and lysosomal degradation. Required for embryonic heart development. Required for normal hearing, possibly through interaction with estrogen in the inner ear. In Rattus norvegicus (Rat), this protein is Low-density lipoprotein receptor-related protein 2 (Lrp2).